The primary structure comprises 130 residues: Small ribosomal subunit protein uS9 (130 aa).

The segment at 106–130 (RDSRKVERKKPGLKKARKASQFSKR) is disordered. Residues 111 to 130 (VERKKPGLKKARKASQFSKR) are compositionally biased toward basic residues.

The protein belongs to the universal ribosomal protein uS9 family.

This Streptococcus pneumoniae serotype 2 (strain D39 / NCTC 7466) protein is Small ribosomal subunit protein uS9.